Here is a 512-residue protein sequence, read N- to C-terminus: Serine/threonine-protein kinase BSK1 (512 aa).

Gly2 carries N-myristoyl glycine lipidation. The disordered stretch occupies residues 8–48 (FSGDNPLGKDGVQPQPLSQNNHGGATTADNGGSGGASGVGG). Gly residues predominate over residues 38–48 (GGSGGASGVGG). Residues 76–331 (DNIVSESGEK…DLVATLAPLQ (256 aa)) enclose the Protein kinase domain. ATP is bound by residues 82-90 (SGEKAPNLV) and Lys104. Catalysis depends on Asp198, which acts as the Proton acceptor. Ser230 carries the phosphoserine modification. A coiled-coil region spans residues 483–508 (AKLNMNTDAADMLNEAAQLEEKRQRG).

Belongs to the protein kinase superfamily. Ser/Thr protein kinase family. As to quaternary structure, interacts with BRI1. Interacts with ASK7/BIN2, BSK5, BSK6, BSK8 and BSK11. Interacts with FLS2. Phosphorylated at Ser-230 by BRI1 upon brassinolide (BL) treatment. Phosphorylation at Ser-230 weakens the interaction between BSK1 and BRI1. Phosphorylated by ASK7/BIN2 and ASK9/BIL2.

Its subcellular location is the cell membrane. The catalysed reaction is L-seryl-[protein] + ATP = O-phospho-L-seryl-[protein] + ADP + H(+). The enzyme catalyses L-threonyl-[protein] + ATP = O-phospho-L-threonyl-[protein] + ADP + H(+). In terms of biological role, serine/threonine kinase that acts as a positive regulator of brassinosteroid (BR) signaling downstream of the receptor kinase BRI1. Mediates signal transduction from BRI1 by functioning as substrate of BRI1. Functions as a positive regulator of plant immunity. May be involved in the regulation of pattern-triggered immunity (PTI) downstream of the flagellin receptor FLS2. Possesses kinase activity in vitro. Kinase activity is required for its function in innate immunity. The polypeptide is Serine/threonine-protein kinase BSK1 (Arabidopsis thaliana (Mouse-ear cress)).